We begin with the raw amino-acid sequence, 372 residues long: Putative aminopeptidase SgcX (372 aa).

Residues His67 and Asp180 each coordinate a divalent metal cation. Glu212 functions as the Proton acceptor in the catalytic mechanism. A divalent metal cation contacts are provided by Glu213, Asp235, and His329.

This sequence belongs to the peptidase M42 family. A divalent metal cation is required as a cofactor.

This is Putative aminopeptidase SgcX (sgcX) from Salmonella typhimurium (strain LT2 / SGSC1412 / ATCC 700720).